A 225-amino-acid chain; its full sequence is Dimerizing cyclase tstC (225 aa).

The first 19 residues, 1 to 19, serve as a signal peptide directing secretion; it reads MRLSTLSSLLLGSSSIVFA. Residues asparagine 146, asparagine 195, and asparagine 217 are each glycosylated (N-linked (GlcNAc...) asparagine).

Belongs to the dimerizing cyclase tstC family.

It catalyses the reaction 2 [4-(deca-1,8-diyl)-2,5-dioxo-2,5-dihydro-3-furanyl]acetate + H(+) = 2-[(1R,8S,14R,15R)-11-hydroxy-14,15-bis[(6E)-oct-6-en-1-yl]-3,5,9-trioxo-4,10-dioxatetracyclo[9.4.0.0(2,6).0(8,12)]pentadeca-2(6),12-dien-8-yl]acetate + CO2. It functions in the pathway secondary metabolite biosynthesis. In terms of biological role, dimerizing cyclase; part of the gene cluster that mediates the biosynthesis of the antihypercholesterolemic agents phomoidrides which are dimeric anhydrides. Within the pathway, tstC produces the bicyclo[4.3.1]deca-1,6-diene core of phomoidrides via the dimerization of the monomeric anhydrides leading to prephomoidride. The pathway begins with the highly reducing polyketide synthase tstA that catalyzes the formation of a C12-fatty acyl-ACP, starting from one acetate and 5 malonate units. The hydrolase tstM is involved in the release of the C12-fatty acyl chain from phiA. The alkylcitrate synthase (ACS) tstJ and the alkylcitrate dehydratase (ACDH) tstI then give rise to decarboxylated monomeric anhydrides by coupling the C12-fatty acyl chain with oxalacetic acid. The cyclase tstC is responsible for the dimerization of the monomeric anhydrides which leads to the production of prephomoidride that contains the characteristic bicyclo[4.3.1]deca-1,6-diene system of phomoidrides. Iterative oxidation catalyzed by the alpha-ketoglutarate-dependent dioxygenase tstK produced then phomoidride A. Finally, the methyltransferase tstE converts phomoidride A to phomoidride B via an acetalization reaction. The phosphatidylethanolamine-binding protein tstB and tstN are not essential for dimerization and their functions have still to be determined. The sequence is that of Dimerizing cyclase tstC from Talaromyces stipitatus (strain ATCC 10500 / CBS 375.48 / QM 6759 / NRRL 1006) (Penicillium stipitatum).